Reading from the N-terminus, the 196-residue chain is FAD-linked sulfhydryl oxidase ERV2 (196 aa).

The Cytoplasmic portion of the chain corresponds to 1 to 12 (MKQIVKRSHAIR). The chain crosses the membrane as a helical; Signal-anchor span at residues 13 to 35 (IVAALGIIGLWMFFSSNELSIAT). At 36-196 (PGLIKAKSGI…SLEKEAKQHG (161 aa)) the chain is on the lumenal side. An ERV/ALR sulfhydryl oxidase domain is found at 72–174 (MGDDKVKKEV…YDCATILEDY (103 aa)). Residues Lys-78, Arg-83, and Trp-86 each contribute to the FAD site. Cys-121 and Cys-124 form a disulfide bridge. The FAD site is built by His-127, Cys-150, His-153, Asn-157, Lys-162, and Tyr-174. An intrachain disulfide couples Cys-150 to Cys-167. A disulfide bridge links Cys-176 with Cys-178.

In terms of assembly, homodimer. Interacts with the substrate protein PDI1, forming transient intermolecular disulfide bridges. FAD is required as a cofactor.

The protein localises to the endoplasmic reticulum membrane. The enzyme catalyses 2 R'C(R)SH + O2 = R'C(R)S-S(R)CR' + H2O2. Functionally, FAD-dependent sulfhydryl oxidase that catalyzes disulfide bond formation in the endoplasmic reticulum lumen in parallel to ERO1. The sequence is that of FAD-linked sulfhydryl oxidase ERV2 (ERV2) from Saccharomyces cerevisiae (strain ATCC 204508 / S288c) (Baker's yeast).